Consider the following 317-residue polypeptide: (2S)-3-sulfopropanediol dehydratase activating enzyme (317 aa).

Positions 18–306 (HDGPGLRTEL…QMLAEYFNQR (289 aa)) constitute a Radical SAM core domain. 11 residues coordinate [4Fe-4S] cluster: cysteine 32, cysteine 36, cysteine 39, cysteine 58, cysteine 64, cysteine 67, cysteine 71, cysteine 92, cysteine 95, cysteine 98, and cysteine 102. 38 to 40 (WCS) is a binding site for S-adenosyl-L-methionine. 2 4Fe-4S ferredoxin-type domains span residues 49–82 (AQVG…FTRG) and 83–112 (KLTS…LWGK). S-adenosyl-L-methionine-binding positions include glycine 142 and 191–193 (DIK).

This sequence belongs to the organic radical-activating enzymes family. [4Fe-4S] cluster is required as a cofactor.

The catalysed reaction is glycyl-[protein] + reduced [flavodoxin] + S-adenosyl-L-methionine = glycin-2-yl radical-[protein] + semiquinone [flavodoxin] + 5'-deoxyadenosine + L-methionine + H(+). The protein operates within organosulfur degradation; alkanesulfonate degradation. Its function is as follows. Involved in the degradation of the organosulfur compound 2(S)-dihydroxypropanesulfonate (DHPS). Catalyzes activation of the (2S)-3-sulfopropanediol dehydratase HpfG under anaerobic conditions by generation of an organic free radical on a glycine residue. This is (2S)-3-sulfopropanediol dehydratase activating enzyme from Klebsiella oxytoca.